We begin with the raw amino-acid sequence, 287 residues long: Telomere repeat-binding factor 5 (287 aa).

In terms of domain architecture, HTH myb-type spans 1 to 62 (MGNQKLKWTA…WRNLSVPPGT (62 aa)). The segment at residues 28 to 58 (WKNILRDPEFADQLIHRSNIDLKDKWRNLSV) is a DNA-binding region (H-T-H motif). The segment at 58–107 (VPPGTQSLTNKARPAKVKEEGDTPAADANDAVTIPRPIPTIPPPPGRRTL) is disordered. The segment covering 93–103 (RPIPTIPPPPG) has biased composition (pro residues). Residues 119–193 (NAPRYDGVIF…SIQNFYKIPD (75 aa)) form the H15 domain. Positions 233–259 (AACKVVEAENKIDVAKLAAEEFEKMTK) form a coiled coil.

Belongs to the histone H1/H5 family. SMH subfamily.

The protein localises to the nucleus. Its subcellular location is the chromosome. Functionally, binds preferentially double-stranded telomeric repeats. This chain is Telomere repeat-binding factor 5, found in Arabidopsis thaliana (Mouse-ear cress).